Reading from the N-terminus, the 144-residue chain is 3-hydroxyacyl-[acyl-carrier-protein] dehydratase FabZ (144 aa).

Histidine 48 is a catalytic residue.

Belongs to the thioester dehydratase family. FabZ subfamily.

It is found in the cytoplasm. The catalysed reaction is a (3R)-hydroxyacyl-[ACP] = a (2E)-enoyl-[ACP] + H2O. Its function is as follows. Involved in unsaturated fatty acids biosynthesis. Catalyzes the dehydration of short chain beta-hydroxyacyl-ACPs and long chain saturated and unsaturated beta-hydroxyacyl-ACPs. The protein is 3-hydroxyacyl-[acyl-carrier-protein] dehydratase FabZ of Chloroflexus aggregans (strain MD-66 / DSM 9485).